Consider the following 1307-residue polypeptide: TBC1 domain family member 4 (1307 aa).

An N-acetylmethionine modification is found at M1. Residues M1–K30 are disordered. A compositionally biased stretch (pro residues) spans P13–P23. In terms of domain architecture, PID 1 spans P53–R209. Residues L237 to D246 show a composition bias toward basic and acidic residues. The tract at residues L237 to S276 is disordered. 3 positions are modified to phosphoserine: S258, S261, and S320. The region spanning R319–I475 is the PID 2 domain. Phosphoserine; by PKB/AKT1 is present on residues S324 and S348. The interval Q330 to K360 is disordered. S351 carries the phosphoserine modification. N6-acetyllysine is present on K484. Position 573 is a phosphoserine (S573). A Phosphothreonine modification is found at T575. Position 577 is a phosphoserine; by PKB/AKT1 (S577). At R584 the chain carries Omega-N-methylarginine. Phosphoserine; by PKB/AKT1 is present on S595. S598 and S616 each carry phosphoserine. Disordered regions lie at residues N603–C684 and S732–P774. Residues D615–S624 show a composition bias toward pro residues. T620 is modified (phosphothreonine). A Phosphoserine modification is found at S624. T649 bears the Phosphothreonine; by PKB/AKT1 mark. Phosphoserine is present on S673. The span at S757–A767 shows a compositional bias: polar residues. S758 bears the Phosphoserine; by PKB/AKT1 mark. Phosphoserine is present on residues S761 and S764. Position 770 is a phosphothreonine (T770). A Rab-GAP TBC domain is found at G927–G1121.

Phosphorylated by AKT1; insulin-induced. Also phosphorylated by AMPK in response to insulin. Insulin-stimulated phosphorylation is required for SLC2A4/GLUT4 translocation. Has no effect on SLC2A4/GLUT4 internalization. In terms of tissue distribution, widely expressed, including in pancreatic beta cells.

The protein resides in the cytoplasm. May act as a GTPase-activating protein for RAB2A, RAB8A, RAB10 and RAB14. Promotes insulin-induced glucose transporter SLC2A4/GLUT4 translocation at the plasma membrane, thus increasing glucose uptake. The chain is TBC1 domain family member 4 (Tbc1d4) from Mus musculus (Mouse).